Here is a 447-residue protein sequence, read N- to C-terminus: UDP-glycosyltransferase 76E3 (447 aa).

UDP-alpha-D-glucose-binding positions include serine 269, 328-330, 345-353, and 367-370; these read APQ, HCGWNSTLE, and QGEQ.

Belongs to the UDP-glycosyltransferase family.

The sequence is that of UDP-glycosyltransferase 76E3 (UGT76E3) from Arabidopsis thaliana (Mouse-ear cress).